The chain runs to 332 residues: Small ribosomal subunit biogenesis GTPase RsgA (332 aa).

Positions 103–259 constitute a CP-type G domain; sequence RQQLIAANLD…LIDTPGMREL (157 aa). Residues 148–151 and 201–209 each bind GTP; these read TKVD and GSSGAGKST. Residues C281, C286, H288, and C294 each coordinate Zn(2+).

This sequence belongs to the TRAFAC class YlqF/YawG GTPase family. RsgA subfamily. In terms of assembly, monomer. Associates with 30S ribosomal subunit, binds 16S rRNA. It depends on Zn(2+) as a cofactor.

It is found in the cytoplasm. Its function is as follows. One of several proteins that assist in the late maturation steps of the functional core of the 30S ribosomal subunit. Helps release RbfA from mature subunits. May play a role in the assembly of ribosomal proteins into the subunit. Circularly permuted GTPase that catalyzes slow GTP hydrolysis, GTPase activity is stimulated by the 30S ribosomal subunit. This Xylella fastidiosa (strain M23) protein is Small ribosomal subunit biogenesis GTPase RsgA.